The chain runs to 1383 residues: DNA-directed RNA polymerase subunit beta (1383 aa).

It belongs to the RNA polymerase beta chain family. The RNAP catalytic core consists of 2 alpha, 1 beta, 1 beta' and 1 omega subunit. When a sigma factor is associated with the core the holoenzyme is formed, which can initiate transcription.

The enzyme catalyses RNA(n) + a ribonucleoside 5'-triphosphate = RNA(n+1) + diphosphate. DNA-dependent RNA polymerase catalyzes the transcription of DNA into RNA using the four ribonucleoside triphosphates as substrates. This is DNA-directed RNA polymerase subunit beta from Xanthomonas axonopodis pv. citri (strain 306).